The sequence spans 313 residues: BTB/POZ domain-containing adapter for CUL3-mediated RhoA degradation protein 3 (313 aa).

N-acetylmethionine is present on Met1. Phosphoserine is present on Ser23. The BTB domain maps to 32-100; that stretch reads KYVKLNVGGA…LRDGAVPLPE (69 aa). Positions 239–245 match the PCNA-binding motif; the sequence is QTKVEFP.

It belongs to the BACURD family. Homotetramer; forms a two-fold symmetric tetramer in solution. Interacts with CUL3; interaction is direct and forms a 5:5 heterodecamer. Component of the BCR(BACURD3) E3 ubiquitin ligase complex, at least composed of CUL3, KCTD10/BACURD3 and RBX1. Interacts with DNA polymerase delta subunit 2/POLD2. Interacts with PCNA.

The protein localises to the nucleus. It participates in protein modification; protein ubiquitination. Its function is as follows. Substrate-specific adapter of a BCR (BTB-CUL3-RBX1) E3 ubiquitin-protein ligase complex. The BCR(BACURD3) E3 ubiquitin ligase complex mediates the ubiquitination of target proteins, leading to their degradation by the proteasome. In Homo sapiens (Human), this protein is BTB/POZ domain-containing adapter for CUL3-mediated RhoA degradation protein 3 (KCTD10).